Reading from the N-terminus, the 485-residue chain is MDHENLMKYLEEFRSIRFQPDFQKVDAERNVRYCEITDFPISNISFELLETGVSQQWRNCDQNLFNEYLKTYKNGGYSQFEDLLFKIWGYSEEKERFDLPALKSFYRKMSEIVGEDEVLEKLARLVRITKSACEVLPEKIYRLVGDIESATFSHIQCASLIAWMFFSDTPRLSFIIILQKTTCVAVEKLKFLFTYFDKMSIDPPIGAVSFRKMRITHKQYLENWKLRETNLLPDVQVFDKMSIEETALCTQIDFANKRLGGGVLKGGAVQEEIRFMMCPEMMVAILLNDVTQDLEAISIVGAYVFSSYTGYSNTLKWAKITPKHSAQNNNSFRDQFGRLQTETVAIDAVRNAGTPLECLLNQLTTEKLTREVRKAAIGFLSAGDGFSKIPVVSGWWGCGAFRGNKPLKFLIQVIACGISDRPLQFCTFGDTELAKKCEEMMTLFRNNNVRTGQLFLIINSIGPPLNYSEQYVFDAIRAKINSTKA.

This sequence belongs to the poly(ADP-ribose) glycohydrolase family. Expressed in head and tail neurons.

It is found in the cytoplasm. It catalyses the reaction [(1''-&gt;2')-ADP-alpha-D-ribose](n) + H2O = [(1''-&gt;2')-ADP-alpha-D-ribose](n-1) + ADP-D-ribose. In terms of biological role, poly(ADP-ribose) synthesized after DNA damage is only present transiently and is rapidly degraded by poly(ADP-ribose) glycohydrolase. Poly(ADP-ribose) metabolism may be required for maintenance of the normal function of neuronal cells. The chain is Poly(ADP-ribose) glycohydrolase 2 from Caenorhabditis elegans.